A 1317-amino-acid polypeptide reads, in one-letter code: WASH complex subunit 2 (1317 aa).

Residues 1-219 (MNRTSPDSER…VGSDRGSIVD (219 aa)) are sufficient for interaction with WASHC3, WASHC4 and WASHC5; required for interaction with WASHC1. Phosphoserine occurs at positions 157, 159, 204, 205, and 209. The segment covering 201–213 (GELSSEEGSVGSD) has biased composition (low complexity). The tract at residues 201–630 (GELSSEEGSV…RKSKGELWDS (430 aa)) is disordered. Composition is skewed to acidic residues over residues 219 to 232 (DSEEEKEEEESDED) and 250 to 274 (DEEEDDDGDLFADSEKEGDDIEDIE). At Ser284 the chain carries Phosphoserine. Basic and acidic residues-rich tracts occupy residues 289 to 325 (LAARIKGDMSNQLKEEQIADGKPQKTMKEKKEKRTPP) and 366 to 376 (DLFRETSRDRP). Thr323 carries the phosphothreonine modification. Positions 348 to 582 (SRGGLFSGQG…QVSSQQPQSQ (235 aa)) are sufficient for interaction with CCDC93. The segment at 349-1317 (RGGLFSGQGL…DDPLNAFGSQ (969 aa)) is interaction with VPS35. Positions 358 to 368 (LFDDEDESDLF) match the LFa 1 motif. The segment covering 379 to 399 (APVSEESSSPKPGKKIPAGAV) has biased composition (low complexity). Ser385 and Ser387 each carry phosphoserine. 2 consecutive short sequence motifs (LFa) follow at residues 433–445 (LFDDNDDDDDNFF) and 464–473 (IFDDEEGDLF). Residues 500–518 (TLPSSKNPKLVSETKTQKG) are compositionally biased toward polar residues. Short sequence motifs (LFa) lie at residues 519-530 (LFSDEEDSEDLF) and 554-565 (LFGDEDEEDNLF). Ser521 and Ser526 each carry phosphoserine. Positions 529–548 (LFSSQNSSKSKSASLLSSQL) are enriched in low complexity. Residues 569 to 582 (PAKKQVSSQQPQSQ) are compositionally biased toward low complexity. Over residues 583–592 (EKPKPSEQPK) the composition is skewed to basic and acidic residues. Residues 599–611 (LFSSDEEDQWNIT) carry the LFa 6 motif. A phosphoserine mark is found at Ser601 and Ser602. The span at 613 to 627 (SHTKLATDRKSKGEL) shows a compositional bias: basic and acidic residues. 2 short sequence motifs (LFa) span residues 646 to 657 (LFEEDDDEADLF) and 673 to 685 (LFEDDDDSGSSLF). A disordered region spans residues 667–817 (TQRTSLLFED…GRPKSTGVFQ (151 aa)). Ser710 is modified (phosphoserine). Residues 717–744 (VPSRVKSVDVKVGNGKEADVAKVTEKEG) are compositionally biased toward basic and acidic residues. Phosphoserine is present on residues Ser763 and Ser778. The segment covering 788–810 (EDQSNTHVSKNDAEKGLKTDGRP) has biased composition (basic and acidic residues). 2 consecutive short sequence motifs (LFa) follow at residues 815–823 (VFQDEELLF) and 832–838 (DPDVDLF). Ser853 carries the phosphoserine modification. An LFa 11 motif is present at residues 854 to 864 (LFGDDEDYDLF). Disordered regions lie at residues 867–926 (AKTQ…REPS) and 960–1079 (ELAF…AAPP). Over residues 874–906 (PEKKGALKKDRPVSLKNEEAPESTEGSKEKSLW) the composition is skewed to basic and acidic residues. Residues 912 to 1317 (QDSSGLTPFK…DDPLNAFGSQ (406 aa)) form an interaction with phospholipids region. A compositionally biased stretch (basic residues) spans 1003–1021 (NKSRVKVRGKRRPQTRAAR). Residues 1004–1022 (KSRVKVRGKRRPQTRAARR) form a required for interaction with F-actin-capping protein subunit alpha (CAPZA1 or CAPZA2 or CAPZA3) region. A phosphoserine mark is found at Ser1029, Ser1047, Ser1064, and Ser1092. Residues 1107–1114 (LFDSGDIF) carry the LFa 12 motif. Residues 1119-1141 (GSQSMEGTKVKAAETPAHLSGGS) form a disordered region. Short sequence motifs (LFa) lie at residues 1147 to 1161 (VFPALSEASSTDDLF), 1177 to 1185 (LLEDEDDLF), 1210 to 1216 (IFEDDIF), 1238 to 1246 (LFDDNIDIF), 1266 to 1275 (VFDDDTDDIF), and 1306 to 1314 (IFDDPLNAF). Phosphoserine is present on residues Ser1152, Ser1155, and Ser1156. The interval 1158–1183 (DDLFQTVKPRPAKKRNPFPLLEDEDD) is disordered. The segment at 1277-1317 (SGLQAKKSKPKSQSAEATSELRSDHKVSNIFDDPLNAFGSQ) is disordered. At Ser1316 the chain carries Phosphoserine.

The protein belongs to the FAM21 family. In terms of assembly, component of the WASH core complex also described as WASH regulatory complex SHRC composed of WASHC1, WASHC2, WASHC3, WASHC4 and WASHC5; in the complex interacts (via N-terminus) directly with WASHC1. The WASH core complex associates via WASHC2 with the F-actin-capping protein dimer (formed by CAPZA1, CAPZA2 or CAPZA3 and CAPZB) in a transient or substoichiometric manner which was initially described as WASH complex. Interacts with VPS35; mediates the association with the retromer CSC complex. Interacts with FKBP15. Interacts with CCDC93, CCDC22, C16orf62 homolog; indicative for an association of the WASH core complex with the CCC complex. Directly interacts with TBC1D23.

The protein resides in the early endosome membrane. It is found in the cell membrane. Functionally, acts as a component of the WASH core complex that functions as a nucleation-promoting factor (NPF) at the surface of endosomes, where it recruits and activates the Arp2/3 complex to induce actin polymerization, playing a key role in the fission of tubules that serve as transport intermediates during endosome sorting. Mediates the recruitment of the WASH core complex to endosome membranes via binding to phospholipids and VPS35 of the retromer CSC. Mediates the recruitment of the F-actin-capping protein dimer to the WASH core complex probably promoting localized F-actin polymerization needed for vesicle scission. Via its C-terminus binds various phospholipids, most strongly phosphatidylinositol 4-phosphate (PtdIns-(4)P), phosphatidylinositol 5-phosphate (PtdIns-(5)P) and phosphatidylinositol 3,5-bisphosphate (PtdIns-(3,5)P2). Involved in the endosome-to-plasma membrane trafficking and recycling of SNX27-retromer-dependent cargo proteins, such as GLUT1. Required for the association of DNAJC13, ENTR1, ANKRD50 with retromer CSC subunit VPS35. Required for the endosomal recruitment of CCC complex subunits COMMD1, CCDC93 and C16orf62 homolog. This Cricetulus griseus (Chinese hamster) protein is WASH complex subunit 2.